The sequence spans 528 residues: G protein-coupled receptor 161 (528 aa).

Over 1-30 (MSLNSSLGHRKELSNLTEGASDQGGSGVTE) the chain is Extracellular. Residues N4 and N15 are each glycosylated (N-linked (GlcNAc...) asparagine). Residues 31–51 (FVAIVIITVFVCLGNLVIVIT) form a helical membrane-spanning segment. Residues 52–64 (LYRKSYLLTLSNK) are Cytoplasmic-facing. The chain crosses the membrane as a helical span at residues 65-85 (FVFSLTLSNFLLSVLVLPFVV). At 86–101 (TSSIRREWIFGVVWCN) the chain is on the extracellular side. Residues C100 and C178 are joined by a disulfide bond. A glycan (N-linked (GlcNAc...) asparagine) is linked at N101. Residues 102–122 (FSALLYLLISSASMLTLGIIA) traverse the membrane as a helical segment. The Cytoplasmic segment spans residues 123-143 (VDRYYAVLYPMAYPMKITGNR). Residues 144–164 (AVMVLAYIWLHSLIGCLPPLF) traverse the membrane as a helical segment. At 165–190 (GWSSVEFDEFKWMCVAAWHREPGYTA) the chain is on the extracellular side. A helical transmembrane segment spans residues 191 to 211 (FWQIWCALLPFLVMLVCYGFI). The Cytoplasmic segment spans residues 212–269 (FRVARVKARKVHCGAVVTVEVGVQRTGRKNSSTSTSSSGSRKSAFQGVVYSANQCKAL). Residues 270-290 (VTILVVIGAFMVTWGPYMVVI) form a helical membrane-spanning segment. Residues 291-306 (TSEALWGKNCVSPTLE) lie on the Extracellular side of the membrane. Residues 307–327 (TWATWLSFTSAICHPLIYGLW) form a helical membrane-spanning segment. Residues 328-528 (NKTVRKELLG…EGDVLATEQR (201 aa)) are Cytoplasmic-facing.

Belongs to the G-protein coupled receptor 1 family.

The protein resides in the cell projection. Its subcellular location is the cilium membrane. The protein localises to the cell membrane. Functionally, key negative regulator of Shh signaling, which promotes the processing of GLI3 into GLI3R during neural tube development. Recruited by TULP3 and the IFT-A complex to primary cilia and acts as a regulator of the PKA-dependent basal repression machinery in Shh signaling by increasing cAMP levels, leading to promote the PKA-dependent processing of GLI3 into GLI3R and repress the Shh signaling. In presence of SHH, it is removed from primary cilia and is internalized into recycling endosomes, preventing its activity and allowing activation of the Shh signaling. Its ligand is unknown. This Bos taurus (Bovine) protein is G protein-coupled receptor 161 (GPR161).